Here is a 563-residue protein sequence, read N- to C-terminus: Dihydroxy-acid dehydratase (563 aa).

Cys51 contributes to the [2Fe-2S] cluster binding site. Asp83 contacts Mg(2+). Cys124 contributes to the [2Fe-2S] cluster binding site. 2 residues coordinate Mg(2+): Asp125 and Lys126. An N6-carboxylysine modification is found at Lys126. Cys196 provides a ligand contact to [2Fe-2S] cluster. Glu448 provides a ligand contact to Mg(2+). Ser474 acts as the Proton acceptor in catalysis.

Belongs to the IlvD/Edd family. In terms of assembly, homodimer. It depends on [2Fe-2S] cluster as a cofactor. The cofactor is Mg(2+).

The enzyme catalyses (2R)-2,3-dihydroxy-3-methylbutanoate = 3-methyl-2-oxobutanoate + H2O. It catalyses the reaction (2R,3R)-2,3-dihydroxy-3-methylpentanoate = (S)-3-methyl-2-oxopentanoate + H2O. Its pathway is amino-acid biosynthesis; L-isoleucine biosynthesis; L-isoleucine from 2-oxobutanoate: step 3/4. It participates in amino-acid biosynthesis; L-valine biosynthesis; L-valine from pyruvate: step 3/4. Its function is as follows. Functions in the biosynthesis of branched-chain amino acids. Catalyzes the dehydration of (2R,3R)-2,3-dihydroxy-3-methylpentanoate (2,3-dihydroxy-3-methylvalerate) into 2-oxo-3-methylpentanoate (2-oxo-3-methylvalerate) and of (2R)-2,3-dihydroxy-3-methylbutanoate (2,3-dihydroxyisovalerate) into 2-oxo-3-methylbutanoate (2-oxoisovalerate), the penultimate precursor to L-isoleucine and L-valine, respectively. This is Dihydroxy-acid dehydratase from Polynucleobacter necessarius subsp. necessarius (strain STIR1).